Consider the following 264-residue polypeptide: Ribosomal RNA small subunit methyltransferase J (264 aa).

S-adenosyl-L-methionine contacts are provided by residues 111 to 112 (RD), 127 to 128 (ER), and Asp-180.

Belongs to the methyltransferase superfamily. RsmJ family.

Its subcellular location is the cytoplasm. It carries out the reaction guanosine(1516) in 16S rRNA + S-adenosyl-L-methionine = N(2)-methylguanosine(1516) in 16S rRNA + S-adenosyl-L-homocysteine + H(+). In terms of biological role, specifically methylates the guanosine in position 1516 of 16S rRNA. In Alkalilimnicola ehrlichii (strain ATCC BAA-1101 / DSM 17681 / MLHE-1), this protein is Ribosomal RNA small subunit methyltransferase J.